The chain runs to 508 residues: Anthranilate synthase component 1 (508 aa).

L-tryptophan-binding positions include serine 49 and proline 282–methionine 284. Position 317–318 (glycine 317–threonine 318) interacts with chorismate. Mg(2+) is bound at residue glutamate 344. Residues tyrosine 432, arginine 452, glycine 466 to glycine 468, and glycine 468 each bind chorismate. Glutamate 481 is a Mg(2+) binding site.

It belongs to the anthranilate synthase component I family. In terms of assembly, heterotetramer consisting of two non-identical subunits: a beta subunit (TrpG) and a large alpha subunit (TrpE). The cofactor is Mg(2+).

The enzyme catalyses chorismate + L-glutamine = anthranilate + pyruvate + L-glutamate + H(+). Its pathway is amino-acid biosynthesis; L-tryptophan biosynthesis; L-tryptophan from chorismate: step 1/5. Feedback inhibited by tryptophan. Functionally, part of a heterotetrameric complex that catalyzes the two-step biosynthesis of anthranilate, an intermediate in the biosynthesis of L-tryptophan. In the first step, the glutamine-binding beta subunit (TrpG) of anthranilate synthase (AS) provides the glutamine amidotransferase activity which generates ammonia as a substrate that, along with chorismate, is used in the second step, catalyzed by the large alpha subunit of AS (TrpE) to produce anthranilate. In the absence of TrpG, TrpE can synthesize anthranilate directly from chorismate and high concentrations of ammonia. In Geobacillus stearothermophilus (Bacillus stearothermophilus), this protein is Anthranilate synthase component 1 (trpE).